A 190-amino-acid polypeptide reads, in one-letter code: Potassium-transporting ATPase KdpC subunit (190 aa).

The chain crosses the membrane as a helical span at residues 10 to 30 (TFLFLLLITGGVYPLLTTALG).

The protein belongs to the KdpC family. As to quaternary structure, the system is composed of three essential subunits: KdpA, KdpB and KdpC.

The protein localises to the cell inner membrane. In terms of biological role, part of the high-affinity ATP-driven potassium transport (or Kdp) system, which catalyzes the hydrolysis of ATP coupled with the electrogenic transport of potassium into the cytoplasm. This subunit acts as a catalytic chaperone that increases the ATP-binding affinity of the ATP-hydrolyzing subunit KdpB by the formation of a transient KdpB/KdpC/ATP ternary complex. The protein is Potassium-transporting ATPase KdpC subunit of Escherichia fergusonii (strain ATCC 35469 / DSM 13698 / CCUG 18766 / IAM 14443 / JCM 21226 / LMG 7866 / NBRC 102419 / NCTC 12128 / CDC 0568-73).